We begin with the raw amino-acid sequence, 320 residues long: Flavonol 4'-sulfotransferase (320 aa).

69 to 74 (KSGTTW) contacts 3'-phosphoadenylyl sulfate. The active-site Proton acceptor is the His-129. Residues Arg-151, Ser-159, Tyr-217, and 285 to 287 (RKA) contribute to the 3'-phosphoadenylyl sulfate site.

The protein belongs to the sulfotransferase 1 family. In terms of tissue distribution, highest in shoot tips and lowest in mature leaves and roots.

Its subcellular location is the cytoplasm. The catalysed reaction is quercetin 3-sulfate + 3'-phosphoadenylyl sulfate = quercetin 3,4'-bissulfate + adenosine 3',5'-bisphosphate + H(+). With respect to regulation, no requirement for divalent cations and insensitive to p-chloromercuribenzoate, iodoacetate, or iodoacetamide. Sulfotransferase that utilizes 3'-phospho-5'-adenylyl sulfate (PAPS) as sulfonate donor to catalyze the sulfate conjugation of quercetin 3-sulfate &gt; kaempferol 3-sulfate &gt; isorhamnetin 3-sulfate &gt; patuletin 3-sulfate, but not tamarixetin 3-sulfate. O-sulfation of position 4' of flavonol. May play a role in auxin transport. The polypeptide is Flavonol 4'-sulfotransferase (Flaveria chlorifolia (Clasping yellowtops)).